The sequence spans 468 residues: Transmembrane protein 151B (468 aa).

Residues 1 to 25 form a disordered region; that stretch reads MPEDGGGDSGDVPEIIPDGEPLREE. Transmembrane regions (helical) follow at residues 45–65 and 98–118; these read CLLLTLLIHACGAVVAWCRLA and YLYIPLAFVSLLYLLYLAECW. Positions 384–438 are disordered; sequence VSSNSLPPARPSGPRLPFSRSRLSLGAGGRATPGVFRSLSGGPLGRRGEDTEPLE.

This sequence belongs to the TMEM151 family.

It localises to the membrane. This Bos taurus (Bovine) protein is Transmembrane protein 151B (TMEM151B).